A 296-amino-acid polypeptide reads, in one-letter code: GTP-binding protein GEM (296 aa).

Disordered stretches follow at residues 1–20 and 37–68; these read MTLN…PQQQ and PHQY…SVIS. Low complexity predominate over residues 57–68; that stretch reads SWSSDSTDSVIS. Residues 82–89 and 191–194 contribute to the GTP site; these read GEQGVGKS and NKSD. Residues 266 to 285 form a calmodulin-binding region; the sequence is ARRFWGKIVAKNNKNMAFKL.

This sequence belongs to the small GTPase superfamily. RGK family. Interacts with calmodulin in a Ca(2+)-dependent manner. Binds ROCK1. Phosphorylated on tyrosine residues.

Its subcellular location is the cell membrane. Its function is as follows. Could be a regulatory protein, possibly participating in receptor-mediated signal transduction at the plasma membrane. Has guanine nucleotide-binding activity but undetectable intrinsic GTPase activity. This chain is GTP-binding protein GEM (GEM), found in Pongo abelii (Sumatran orangutan).